The chain runs to 511 residues: V-type proton ATPase subunit B, brain isoform (511 aa).

Residue arginine 400 coordinates ATP.

It belongs to the ATPase alpha/beta chains family. V-ATPase is a heteromultimeric enzyme made up of two complexes: the ATP-hydrolytic V1 complex and the proton translocation V0 complex. The V1 complex consists of three catalytic AB heterodimers that form a heterohexamer, three peripheral stalks each consisting of EG heterodimers, one central rotor including subunits D and F, and the regulatory subunits C and H. The proton translocation complex V0 consists of the proton transport subunit a, a ring of proteolipid subunits c9c'', rotary subunit d, subunits e and f, and the accessory subunits ATP6AP1/Ac45 and ATP6AP2/PRR. Expressed in brain (at protein level). Expressed in all tissues tested, but highest in brain and in adrenal medulla.

The protein resides in the apical cell membrane. Its subcellular location is the melanosome. It is found in the cytoplasm. It localises to the cytoplasmic vesicle. The protein localises to the clathrin-coated vesicle membrane. The protein resides in the secretory vesicle. Its subcellular location is the synaptic vesicle membrane. In terms of biological role, non-catalytic subunit of the V1 complex of vacuolar(H+)-ATPase (V-ATPase), a multisubunit enzyme composed of a peripheral complex (V1) that hydrolyzes ATP and a membrane integral complex (V0) that translocates protons. V-ATPase is responsible for acidifying and maintaining the pH of intracellular compartments and in some cell types, is targeted to the plasma membrane, where it is responsible for acidifying the extracellular environment. In renal intercalated cells, can partially compensate the lack of ATP6V1B1 and mediate secretion of protons (H+) into the urine under base-line conditions but not in conditions of acid load. This chain is V-type proton ATPase subunit B, brain isoform (ATP6V1B2), found in Bos taurus (Bovine).